A 352-amino-acid chain; its full sequence is Peptide chain release factor 1 (352 aa).

Glutamine 229 is modified (N5-methylglutamine).

This sequence belongs to the prokaryotic/mitochondrial release factor family. Methylated by PrmC. Methylation increases the termination efficiency of RF1.

Its subcellular location is the cytoplasm. Functionally, peptide chain release factor 1 directs the termination of translation in response to the peptide chain termination codons UAG and UAA. The protein is Peptide chain release factor 1 of Granulibacter bethesdensis (strain ATCC BAA-1260 / CGDNIH1).